Here is a 332-residue protein sequence, read N- to C-terminus: Holliday junction branch migration complex subunit RuvB (332 aa).

The large ATPase domain (RuvB-L) stretch occupies residues Met1–Tyr181. ATP is bound by residues Leu20, Arg21, Gly62, Lys65, Thr66, Thr67, Glu128–Phe130, Arg171, Tyr181, and Arg218. Position 66 (Thr66) interacts with Mg(2+). The tract at residues Ala182 to Asp252 is small ATPAse domain (RuvB-S). Residues His255–Lys332 are head domain (RuvB-H). DNA is bound by residues Arg291, Arg310, Arg312, and Arg315.

This sequence belongs to the RuvB family. Homohexamer. Forms an RuvA(8)-RuvB(12)-Holliday junction (HJ) complex. HJ DNA is sandwiched between 2 RuvA tetramers; dsDNA enters through RuvA and exits via RuvB. An RuvB hexamer assembles on each DNA strand where it exits the tetramer. Each RuvB hexamer is contacted by two RuvA subunits (via domain III) on 2 adjacent RuvB subunits; this complex drives branch migration. In the full resolvosome a probable DNA-RuvA(4)-RuvB(12)-RuvC(2) complex forms which resolves the HJ.

Its subcellular location is the cytoplasm. It carries out the reaction ATP + H2O = ADP + phosphate + H(+). In terms of biological role, the RuvA-RuvB-RuvC complex processes Holliday junction (HJ) DNA during genetic recombination and DNA repair, while the RuvA-RuvB complex plays an important role in the rescue of blocked DNA replication forks via replication fork reversal (RFR). RuvA specifically binds to HJ cruciform DNA, conferring on it an open structure. The RuvB hexamer acts as an ATP-dependent pump, pulling dsDNA into and through the RuvAB complex. RuvB forms 2 homohexamers on either side of HJ DNA bound by 1 or 2 RuvA tetramers; 4 subunits per hexamer contact DNA at a time. Coordinated motions by a converter formed by DNA-disengaged RuvB subunits stimulates ATP hydrolysis and nucleotide exchange. Immobilization of the converter enables RuvB to convert the ATP-contained energy into a lever motion, pulling 2 nucleotides of DNA out of the RuvA tetramer per ATP hydrolyzed, thus driving DNA branch migration. The RuvB motors rotate together with the DNA substrate, which together with the progressing nucleotide cycle form the mechanistic basis for DNA recombination by continuous HJ branch migration. Branch migration allows RuvC to scan DNA until it finds its consensus sequence, where it cleaves and resolves cruciform DNA. This is Holliday junction branch migration complex subunit RuvB from Streptococcus pneumoniae serotype 2 (strain D39 / NCTC 7466).